The following is a 93-amino-acid chain: Putative septation protein SpoVG (93 aa).

This sequence belongs to the SpoVG family.

Functionally, could be involved in septation. The polypeptide is Putative septation protein SpoVG (Treponema denticola (strain ATCC 35405 / DSM 14222 / CIP 103919 / JCM 8153 / KCTC 15104)).